The sequence spans 64 residues: Large ribosomal subunit protein uL29 (64 aa).

The protein belongs to the universal ribosomal protein uL29 family.

The polypeptide is Large ribosomal subunit protein uL29 (Coprothermobacter proteolyticus (strain ATCC 35245 / DSM 5265 / OCM 4 / BT)).